The sequence spans 182 residues: UPF0200 protein Mthe_1012 (182 aa).

Residue 8–15 (GMPGSGKS) coordinates ATP.

Belongs to the UPF0200 family.

This Methanothrix thermoacetophila (strain DSM 6194 / JCM 14653 / NBRC 101360 / PT) (Methanosaeta thermophila) protein is UPF0200 protein Mthe_1012.